The following is a 137-amino-acid chain: Large ribosomal subunit protein uL16 (137 aa).

The protein belongs to the universal ribosomal protein uL16 family. As to quaternary structure, part of the 50S ribosomal subunit.

Its function is as follows. Binds 23S rRNA and is also seen to make contacts with the A and possibly P site tRNAs. The protein is Large ribosomal subunit protein uL16 of Ruegeria sp. (strain TM1040) (Silicibacter sp.).